A 195-amino-acid polypeptide reads, in one-letter code: Orotate phosphoribosyltransferase (195 aa).

5-phospho-alpha-D-ribose 1-diphosphate is bound by residues R87, K91, and 112–120 (DDVATTGGS). The orotate site is built by T116 and R144.

Belongs to the purine/pyrimidine phosphoribosyltransferase family. PyrE subfamily. Homodimer. Mg(2+) serves as cofactor.

It carries out the reaction orotidine 5'-phosphate + diphosphate = orotate + 5-phospho-alpha-D-ribose 1-diphosphate. It participates in pyrimidine metabolism; UMP biosynthesis via de novo pathway; UMP from orotate: step 1/2. Functionally, catalyzes the transfer of a ribosyl phosphate group from 5-phosphoribose 1-diphosphate to orotate, leading to the formation of orotidine monophosphate (OMP). The chain is Orotate phosphoribosyltransferase from Sulfurisphaera tokodaii (strain DSM 16993 / JCM 10545 / NBRC 100140 / 7) (Sulfolobus tokodaii).